We begin with the raw amino-acid sequence, 165 residues long: Nucleotide-binding protein Pro_0479 (165 aa).

Belongs to the YajQ family.

Nucleotide-binding protein. The polypeptide is Nucleotide-binding protein Pro_0479 (Prochlorococcus marinus (strain SARG / CCMP1375 / SS120)).